The chain runs to 253 residues: tRNA (guanine-N(1)-)-methyltransferase (253 aa).

S-adenosyl-L-methionine is bound by residues G116 and 136–141 (VGDYIL).

Belongs to the RNA methyltransferase TrmD family. Homodimer.

It localises to the cytoplasm. The catalysed reaction is guanosine(37) in tRNA + S-adenosyl-L-methionine = N(1)-methylguanosine(37) in tRNA + S-adenosyl-L-homocysteine + H(+). Functionally, specifically methylates guanosine-37 in various tRNAs. This is tRNA (guanine-N(1)-)-methyltransferase from Colwellia psychrerythraea (strain 34H / ATCC BAA-681) (Vibrio psychroerythus).